We begin with the raw amino-acid sequence, 527 residues long: Bifunctional purine biosynthesis protein PurH (527 aa).

Positions 9–156 constitute an MGS-like domain; it reads MARKPIRRAL…KNHPSVAVVT (148 aa).

This sequence belongs to the PurH family.

The catalysed reaction is (6R)-10-formyltetrahydrofolate + 5-amino-1-(5-phospho-beta-D-ribosyl)imidazole-4-carboxamide = 5-formamido-1-(5-phospho-D-ribosyl)imidazole-4-carboxamide + (6S)-5,6,7,8-tetrahydrofolate. The enzyme catalyses IMP + H2O = 5-formamido-1-(5-phospho-D-ribosyl)imidazole-4-carboxamide. Its pathway is purine metabolism; IMP biosynthesis via de novo pathway; 5-formamido-1-(5-phospho-D-ribosyl)imidazole-4-carboxamide from 5-amino-1-(5-phospho-D-ribosyl)imidazole-4-carboxamide (10-formyl THF route): step 1/1. It participates in purine metabolism; IMP biosynthesis via de novo pathway; IMP from 5-formamido-1-(5-phospho-D-ribosyl)imidazole-4-carboxamide: step 1/1. This Mycobacterium leprae (strain Br4923) protein is Bifunctional purine biosynthesis protein PurH.